Reading from the N-terminus, the 116-residue chain is Helper of Tim protein 13 (116 aa).

The CHY-type; degenerate zinc-finger motif lies at 10 to 94 (TVDDQSRCVH…SNLICPNCRS (85 aa)). C17, H19, C40, C43, C68, C71, C89, and C92 together coordinate Zn(2+).

As to quaternary structure, interacts with the small Tim proteins TIM8, TIM9, TIM10, TIM12, and TIM13.

It localises to the mitochondrion intermembrane space. Its subcellular location is the mitochondrion membrane. Required for the assembly or recycling of the small Tim proteins in the mitochondrial intermembrane, thereby participating in the import and insertion of multi-pass transmembrane proteins into the mitochondrial inner membrane. Probably acts by facilitating the formation of disulfide bonds in small Tim proteins. The polypeptide is Helper of Tim protein 13 (HOT13) (Saccharomyces cerevisiae (strain ATCC 204508 / S288c) (Baker's yeast)).